The following is a 299-amino-acid chain: GTP cyclohydrolase FolE2 (299 aa).

This sequence belongs to the GTP cyclohydrolase IV family.

It catalyses the reaction GTP + H2O = 7,8-dihydroneopterin 3'-triphosphate + formate + H(+). Its pathway is cofactor biosynthesis; 7,8-dihydroneopterin triphosphate biosynthesis; 7,8-dihydroneopterin triphosphate from GTP: step 1/1. In terms of biological role, converts GTP to 7,8-dihydroneopterin triphosphate. This chain is GTP cyclohydrolase FolE2, found in Klebsiella pneumoniae.